A 438-amino-acid chain; its full sequence is UDP-N-acetylmuramoylalanine--D-glutamate ligase (438 aa).

112–118 (GSNGKST) contributes to the ATP binding site.

Belongs to the MurCDEF family.

The protein localises to the cytoplasm. The catalysed reaction is UDP-N-acetyl-alpha-D-muramoyl-L-alanine + D-glutamate + ATP = UDP-N-acetyl-alpha-D-muramoyl-L-alanyl-D-glutamate + ADP + phosphate + H(+). Its pathway is cell wall biogenesis; peptidoglycan biosynthesis. Cell wall formation. Catalyzes the addition of glutamate to the nucleotide precursor UDP-N-acetylmuramoyl-L-alanine (UMA). This Salmonella typhi protein is UDP-N-acetylmuramoylalanine--D-glutamate ligase.